The following is a 614-amino-acid chain: FAD-linked oxidoreductase ffsJ (614 aa).

Positions 1 to 19 (MRLTRALTPAILALPAAHA) are cleaved as a signal peptide. N-linked (GlcNAc...) asparagine glycans are attached at residues Asn30, Asn53, Asn72, and Asn114. The FAD-binding PCMH-type domain maps to 119–301 (TGSLPAYYID…LSSTHRVEPE (183 aa)). Asn314, Asn329, Asn461, Asn465, Asn478, and Asn514 each carry an N-linked (GlcNAc...) asparagine glycan. A disordered region spans residues 453-495 (NGHGRSNNNNSNNSSTSTSTSTSSKNGSVKPYAYGGKETTSST). Residues 456 to 480 (GRSNNNNSNNSSTSTSTSTSSKNGS) show a composition bias toward low complexity.

Belongs to the oxygen-dependent FAD-linked oxidoreductase family. Requires FAD as cofactor.

The protein operates within mycotoxin biosynthesis. Functionally, FAD-linked oxidoreductase; part of the gene cluster that mediates the biosynthesis of the cytotoxic leucine-containing cytochalasans, including aspochalasin C, aspochalasin E, TMC-169, flavichalasine F, aspergillin PZ, aspochalasin M and flavichalasine G. The first step in the pathway is catalyzed by the hybrid PKS-NRPS ffsA that utilizes 8 units of malonyl-CoA to iteratively assemble the octaketide chain before addition of L-leucine by the C-terminal NRPS modules. Because ffsA lacks a designated enoylreductase (ER) domain, the required activity is provided the enoyl reductase fssC. The methyltransferase (MT) domain of ffsA catalyzes the alpha-methylation at C10 and C14 using S-adenosyl-L-methionine as the methyl-donating cosubstrate. Reduction by the hydrolyase ffsE, followed by dehydration and intra-molecular Diels-Alder cyclization by the Diels-Alderase ffsF then yield the required isoindolone-fused macrocycle. A number of oxidative steps catalyzed by the tailoring cytochrome P450 monooxygenase ffsD, the FAD-linked oxidoreductase ffsJ and the short-chain dehydrogenase/reductase ffsI, are further required to afford the final products. The protein is FAD-linked oxidoreductase ffsJ of Aspergillus flavipes.